Consider the following 286-residue polypeptide: 4-diphosphocytidyl-2-C-methyl-D-erythritol kinase (286 aa).

The active site involves Lys12. ATP is bound at residue 96–106; that stretch reads PHGAGLGGGSA. The active site involves Asp138.

Belongs to the GHMP kinase family. IspE subfamily.

The catalysed reaction is 4-CDP-2-C-methyl-D-erythritol + ATP = 4-CDP-2-C-methyl-D-erythritol 2-phosphate + ADP + H(+). It participates in isoprenoid biosynthesis; isopentenyl diphosphate biosynthesis via DXP pathway; isopentenyl diphosphate from 1-deoxy-D-xylulose 5-phosphate: step 3/6. Functionally, catalyzes the phosphorylation of the position 2 hydroxy group of 4-diphosphocytidyl-2C-methyl-D-erythritol. In Nitratidesulfovibrio vulgaris (strain ATCC 29579 / DSM 644 / CCUG 34227 / NCIMB 8303 / VKM B-1760 / Hildenborough) (Desulfovibrio vulgaris), this protein is 4-diphosphocytidyl-2-C-methyl-D-erythritol kinase.